Here is a 229-residue protein sequence, read N- to C-terminus: NAD(P)H-quinone oxidoreductase subunit K, chloroplastic (229 aa).

Residues Cys43, Cys44, Cys108, and Cys139 each contribute to the [4Fe-4S] cluster site.

Belongs to the complex I 20 kDa subunit family. As to quaternary structure, NDH is composed of at least 16 different subunits, 5 of which are encoded in the nucleus. [4Fe-4S] cluster serves as cofactor.

Its subcellular location is the plastid. It localises to the chloroplast thylakoid membrane. It carries out the reaction a plastoquinone + NADH + (n+1) H(+)(in) = a plastoquinol + NAD(+) + n H(+)(out). The catalysed reaction is a plastoquinone + NADPH + (n+1) H(+)(in) = a plastoquinol + NADP(+) + n H(+)(out). Functionally, NDH shuttles electrons from NAD(P)H:plastoquinone, via FMN and iron-sulfur (Fe-S) centers, to quinones in the photosynthetic chain and possibly in a chloroplast respiratory chain. The immediate electron acceptor for the enzyme in this species is believed to be plastoquinone. Couples the redox reaction to proton translocation, and thus conserves the redox energy in a proton gradient. The chain is NAD(P)H-quinone oxidoreductase subunit K, chloroplastic from Aethionema grandiflorum (Persian stone-cress).